The following is a 704-amino-acid chain: UvrABC system protein C (704 aa).

Positions 1–77 (MIHDPAEPPA…PAQAGAGPMA (77 aa)) are disordered. Acidic residues predominate over residues 49–66 (VEEDDEARLPEVEDEPEA). Over residues 67–77 (EPAQAGAGPMA) the composition is skewed to low complexity. One can recognise a GIY-YIG domain in the interval 92-170 (TSPGVYRMLN…IKQLRPRFNV (79 aa)). A UVR domain is found at 280-315 (RAVKELLAAEMEKASGELEFETAALYRDRLAALSAI).

Belongs to the UvrC family. Interacts with UvrB in an incision complex.

The protein resides in the cytoplasm. In terms of biological role, the UvrABC repair system catalyzes the recognition and processing of DNA lesions. UvrC both incises the 5' and 3' sides of the lesion. The N-terminal half is responsible for the 3' incision and the C-terminal half is responsible for the 5' incision. The polypeptide is UvrABC system protein C (Rhodopseudomonas palustris (strain ATCC BAA-98 / CGA009)).